A 425-amino-acid chain; its full sequence is Diacetylchitobiose binding protein DasA (425 aa).

The N-terminal stretch at 1–20 (MKRKLIAAIGIAGMMVSIAA) is a signal peptide. Cys-21 carries N-palmitoyl cysteine lipidation. The S-diacylglycerol cysteine moiety is linked to residue Cys-21.

This sequence belongs to the bacterial solute-binding protein 1 family. As to quaternary structure, the complex is composed of two ATP-binding proteins (MsiK), two transmembrane proteins (DasB and DasC) and a solute-binding protein (DasA).

Its subcellular location is the cell membrane. Functionally, part of the ABC transporter complex DasABC-MsiK involved in N,N'-diacetylchitobiose ((GlcNAc)2) uptake. Binds specifically to (GlcNAc)2. Can also bind to GlcNAc, (GlcNAc)3, (GlcNAc)4 and (GlcNAc)5, but it exhibits the highest affinity for (GlcNAc)2. Involved in the control of morphological differentiation. The polypeptide is Diacetylchitobiose binding protein DasA (Streptomyces coelicolor (strain ATCC BAA-471 / A3(2) / M145)).